The following is a 274-amino-acid chain: Cytochrome b-c1 complex subunit Rieske, mitochondrial (274 aa).

The Mitochondrial matrix portion of the chain corresponds to 79-103; sequence SHTDVRVPDFSEYRRLEVLDSTKSS. A helical membrane pass occupies residues 104 to 140; sequence RESSEARKGFSYLVTGVTTVGVAYAAKNVVTQFVSSM. The Mitochondrial intermembrane portion of the chain corresponds to 141–274; the sequence is SASADVLALA…FTSDDMVIVG (134 aa). The 86-residue stretch at 187–272 folds into the Rieske domain; that stretch reads EAAVELSQLR…YEFTSDDMVI (86 aa). Residues cysteine 217, histidine 219, cysteine 236, histidine 239, and serine 241 each contribute to the [2Fe-2S] cluster site. Cysteine 222 and cysteine 238 are disulfide-bonded.

Belongs to the Rieske iron-sulfur protein family. In terms of assembly, component of the ubiquinol-cytochrome c oxidoreductase (cytochrome b-c1 complex, complex III, CIII), a multisubunit enzyme composed of 11 subunits. The complex is composed of 3 respiratory subunits cytochrome b, cytochrome c1 and Rieske protein UQCRFS1, 2 core protein subunits UQCRC1/QCR1 and UQCRC2/QCR2, and 6 low-molecular weight protein subunits UQCRH/QCR6, UQCRB/QCR7, UQCRQ/QCR8, UQCR10/QCR9, UQCR11/QCR10 and subunit 9, the cleavage product of Rieske protein UQCRFS1. The complex exists as an obligatory dimer and forms supercomplexes (SCs) in the inner mitochondrial membrane with NADH-ubiquinone oxidoreductase (complex I, CI) and cytochrome c oxidase (complex IV, CIV), resulting in different assemblies (supercomplex SCI(1)III(2)IV(1) and megacomplex MCI(2)III(2)IV(2)). Incorporation of the Rieske protein UQCRFS1 is the penultimate step in complex III assembly. Interacts with TTC19, which is involved in the clearance of UQCRFS1 fragments. As to quaternary structure, component of the ubiquinol-cytochrome c oxidoreductase (cytochrome b-c1 complex, complex III, CIII). Subunit 9 corresponds to the mitochondrial targeting sequence (MTS) of Rieske protein UQCRFS1. It is retained after processing and incorporated inside complex III, where it remains bound to the complex and localizes between the 2 core subunits UQCRC1/QCR1 and UQCRC2/QCR2. Requires [2Fe-2S] cluster as cofactor. Proteolytic processing is necessary for the correct insertion of UQCRFS1 in the complex III dimer. Several fragments are generated during UQCRFS1 insertion, most probably due to the endogenous matrix-processing peptidase (MPP) activity of the 2 core protein subunits UQCRC1/QCR1 and UQCRC2/QCR2, which are homologous to the 2 mitochondrial-processing peptidase (MPP) subunits beta-MPP and alpha-MPP respectively. The action of the protease is also necessary for the clearance of the UQCRFS1 fragments.

The protein resides in the mitochondrion inner membrane. It catalyses the reaction a quinol + 2 Fe(III)-[cytochrome c](out) = a quinone + 2 Fe(II)-[cytochrome c](out) + 2 H(+)(out). Its function is as follows. Component of the ubiquinol-cytochrome c oxidoreductase, a multisubunit transmembrane complex that is part of the mitochondrial electron transport chain which drives oxidative phosphorylation. The respiratory chain contains 3 multisubunit complexes succinate dehydrogenase (complex II, CII), ubiquinol-cytochrome c oxidoreductase (cytochrome b-c1 complex, complex III, CIII) and cytochrome c oxidase (complex IV, CIV), that cooperate to transfer electrons derived from NADH and succinate to molecular oxygen, creating an electrochemical gradient over the inner membrane that drives transmembrane transport and the ATP synthase. The cytochrome b-c1 complex catalyzes electron transfer from ubiquinol to cytochrome c, linking this redox reaction to translocation of protons across the mitochondrial inner membrane, with protons being carried across the membrane as hydrogens on the quinol. In the process called Q cycle, 2 protons are consumed from the matrix, 4 protons are released into the intermembrane space and 2 electrons are passed to cytochrome c. The Rieske protein is a catalytic core subunit containing a [2Fe-2S] iron-sulfur cluster. It cycles between 2 conformational states during catalysis to transfer electrons from the quinol bound in the Q(0) site in cytochrome b to cytochrome c1. Incorporation of UQCRFS1 is the penultimate step in complex III assembly. In terms of biological role, component of the ubiquinol-cytochrome c oxidoreductase (cytochrome b-c1 complex, complex III, CIII). UQCRFS1 undergoes proteolytic processing once it is incorporated in the complex III dimer. One of the fragments, called subunit 9, corresponds to its mitochondrial targeting sequence (MTS). The proteolytic processing is necessary for the correct insertion of UQCRFS1 in the complex III dimer, but the persistence of UQCRFS1-derived fragments may prevent newly imported UQCRFS1 to be processed and assembled into complex III and is detrimental for the complex III structure and function. The protein is Cytochrome b-c1 complex subunit Rieske, mitochondrial (UQCRFS1) of Pongo pygmaeus (Bornean orangutan).